We begin with the raw amino-acid sequence, 355 residues long: Phosphoserine aminotransferase (355 aa).

L-glutamate is bound at residue Arg-41. Pyridoxal 5'-phosphate-binding positions include Ala-75 to Ser-76, Trp-99, Thr-147, Asp-166, and Gln-189. An N6-(pyridoxal phosphate)lysine modification is found at Lys-190. A pyridoxal 5'-phosphate-binding site is contributed by Asn-231–Thr-232.

It belongs to the class-V pyridoxal-phosphate-dependent aminotransferase family. SerC subfamily. In terms of assembly, homodimer. Requires pyridoxal 5'-phosphate as cofactor.

The protein resides in the cytoplasm. The enzyme catalyses O-phospho-L-serine + 2-oxoglutarate = 3-phosphooxypyruvate + L-glutamate. It carries out the reaction 4-(phosphooxy)-L-threonine + 2-oxoglutarate = (R)-3-hydroxy-2-oxo-4-phosphooxybutanoate + L-glutamate. It participates in amino-acid biosynthesis; L-serine biosynthesis; L-serine from 3-phospho-D-glycerate: step 2/3. It functions in the pathway cofactor biosynthesis; pyridoxine 5'-phosphate biosynthesis; pyridoxine 5'-phosphate from D-erythrose 4-phosphate: step 3/5. In terms of biological role, catalyzes the reversible conversion of 3-phosphohydroxypyruvate to phosphoserine and of 3-hydroxy-2-oxo-4-phosphonooxybutanoate to phosphohydroxythreonine. This is Phosphoserine aminotransferase from Bacteroides fragilis (strain ATCC 25285 / DSM 2151 / CCUG 4856 / JCM 11019 / LMG 10263 / NCTC 9343 / Onslow / VPI 2553 / EN-2).